We begin with the raw amino-acid sequence, 633 residues long: DEAD-box ATP-dependent RNA helicase 37 (633 aa).

The tract at residues 1 to 110 (MSASWADVAD…WNNRSGGWDR (110 aa)) is disordered. The residue at position 2 (S2) is an N-acetylserine. Residues 11-25 (SENTGSGSSNQNSHP) are compositionally biased toward polar residues. 2 stretches are compositionally biased toward gly residues: residues 68-80 (GGSG…GGGY) and 87-101 (PGSG…GGGW). The Q motif signature appears at 159–187 (NTFAEIDLGEALNLNIRRCKYVKPTPVQR). Residues 190–374 (IPILLEGRDL…ADFLANYIFL (185 aa)) enclose the Helicase ATP-binding domain. 203–210 (AQTGSGKT) is an ATP binding site. Residues 318 to 321 (DEAD) carry the DEAD box motif. One can recognise a Helicase C-terminal domain in the interval 401–552 (HLMDLLHAQR…EVPEWLTRYA (152 aa)). The tract at residues 555–600 (SSFGGGKNRRSGGRFGGRDFRREGSFGSGRGGYGGGGGGYGGGGGY) is disordered. Residues 580 to 600 (FGSGRGGYGGGGGGYGGGGGY) are compositionally biased toward gly residues.

It belongs to the DEAD box helicase family. DDX3/DED1 subfamily.

It catalyses the reaction ATP + H2O = ADP + phosphate + H(+). This chain is DEAD-box ATP-dependent RNA helicase 37 (RH37), found in Arabidopsis thaliana (Mouse-ear cress).